Consider the following 226-residue polypeptide: ATP-dependent dethiobiotin synthetase BioD (226 aa).

13–18 (DVGKTL) is a binding site for ATP. Thr17 lines the Mg(2+) pocket. The active site involves Lys38. ATP is bound by residues Asp55, 117 to 120 (EGAG), 177 to 178 (NR), 206 to 208 (PFV), and Glu213. Mg(2+)-binding residues include Asp55 and Glu117.

Belongs to the dethiobiotin synthetase family. Homodimer. Requires Mg(2+) as cofactor.

It is found in the cytoplasm. The enzyme catalyses (7R,8S)-7,8-diammoniononanoate + CO2 + ATP = (4R,5S)-dethiobiotin + ADP + phosphate + 3 H(+). Its pathway is cofactor biosynthesis; biotin biosynthesis; biotin from 7,8-diaminononanoate: step 1/2. Functionally, catalyzes a mechanistically unusual reaction, the ATP-dependent insertion of CO2 between the N7 and N8 nitrogen atoms of 7,8-diaminopelargonic acid (DAPA, also called 7,8-diammoniononanoate) to form a ureido ring. This is ATP-dependent dethiobiotin synthetase BioD from Aeromonas hydrophila subsp. hydrophila (strain ATCC 7966 / DSM 30187 / BCRC 13018 / CCUG 14551 / JCM 1027 / KCTC 2358 / NCIMB 9240 / NCTC 8049).